The chain runs to 93 residues: uncharacterized protein (93 aa).

Residues 20–40 (VYIYLCFSLMTIALICYLIHI) form a helical membrane-spanning segment. The N-linked (GlcNAc...) asparagine; by host glycan is linked to Asn78.

This sequence belongs to the asfivirus KP93L family.

The protein localises to the host membrane. This is an uncharacterized protein from Ornithodoros (relapsing fever ticks).